The chain runs to 755 residues: 1,4-alpha-glucan branching enzyme GlgB (755 aa).

Asp431 serves as the catalytic Nucleophile. Glu484 functions as the Proton donor in the catalytic mechanism.

This sequence belongs to the glycosyl hydrolase 13 family. GlgB subfamily. In terms of assembly, monomer.

The catalysed reaction is Transfers a segment of a (1-&gt;4)-alpha-D-glucan chain to a primary hydroxy group in a similar glucan chain.. Its pathway is glycan biosynthesis; glycogen biosynthesis. Its function is as follows. Catalyzes the formation of the alpha-1,6-glucosidic linkages in glycogen by scission of a 1,4-alpha-linked oligosaccharide from growing alpha-1,4-glucan chains and the subsequent attachment of the oligosaccharide to the alpha-1,6 position. This Prochlorococcus marinus (strain NATL1A) protein is 1,4-alpha-glucan branching enzyme GlgB.